Here is a 431-residue protein sequence, read N- to C-terminus: Dihydroorotase (431 aa).

The Zn(2+) site is built by H59 and H61. Substrate contacts are provided by residues 61–63 (HLR) and N93. Residues D151, H178, H231, and D304 each contribute to the Zn(2+) site. D304 is an active-site residue. Residues H308 and 322–323 (FG) each bind substrate.

Belongs to the metallo-dependent hydrolases superfamily. DHOase family. Class I DHOase subfamily. Zn(2+) serves as cofactor.

It catalyses the reaction (S)-dihydroorotate + H2O = N-carbamoyl-L-aspartate + H(+). It functions in the pathway pyrimidine metabolism; UMP biosynthesis via de novo pathway; (S)-dihydroorotate from bicarbonate: step 3/3. Its function is as follows. Catalyzes the reversible cyclization of carbamoyl aspartate to dihydroorotate. The protein is Dihydroorotase of Caldanaerobacter subterraneus subsp. tengcongensis (strain DSM 15242 / JCM 11007 / NBRC 100824 / MB4) (Thermoanaerobacter tengcongensis).